The sequence spans 418 residues: Gene 68 protein (418 aa).

Disordered stretches follow at residues 230 to 304 and 353 to 418; these read IPAP…IHTL and DTFE…ERRA. Residues 241–250 are compositionally biased toward basic and acidic residues; the sequence is RPSEGGDARP. Basic residues predominate over residues 257–266; sequence SRARSVHGRR. Positions 353–369 are enriched in basic and acidic residues; the sequence is DTFEDNRRDELRHDDSR. The span at 395–404 shows a compositional bias: basic residues; sequence PHLRRSRGRG.

The protein belongs to the herpesviridae US2 family.

The polypeptide is Gene 68 protein (Equine herpesvirus 1 (strain Ab4p) (EHV-1)).